Reading from the N-terminus, the 913-residue chain is Striatin-interacting protein homolog (913 aa).

3 stretches are compositionally biased toward low complexity: residues 177 to 188 (QQQQQQQQNENE), 195 to 204 (TNFTTTTTTT), and 791 to 811 (NNNN…NNDN). Disordered regions lie at residues 177 to 204 (QQQQ…TTTT) and 791 to 814 (NNNN…NGLT).

It belongs to the STRIP family.

The sequence is that of Striatin-interacting protein homolog (fam40) from Dictyostelium discoideum (Social amoeba).